The sequence spans 423 residues: Gamma-glutamyl phosphate reductase (423 aa).

The protein belongs to the gamma-glutamyl phosphate reductase family.

It localises to the cytoplasm. It catalyses the reaction L-glutamate 5-semialdehyde + phosphate + NADP(+) = L-glutamyl 5-phosphate + NADPH + H(+). It participates in amino-acid biosynthesis; L-proline biosynthesis; L-glutamate 5-semialdehyde from L-glutamate: step 2/2. Functionally, catalyzes the NADPH-dependent reduction of L-glutamate 5-phosphate into L-glutamate 5-semialdehyde and phosphate. The product spontaneously undergoes cyclization to form 1-pyrroline-5-carboxylate. The sequence is that of Gamma-glutamyl phosphate reductase from Burkholderia thailandensis (strain ATCC 700388 / DSM 13276 / CCUG 48851 / CIP 106301 / E264).